Here is a 499-residue protein sequence, read N- to C-terminus: Type-1 glutamine synthetase 1 (499 aa).

In terms of domain architecture, GS beta-grasp spans 50–146; sequence PQLKFIRVCW…IFGEFFYLDN (97 aa). In terms of domain architecture, GS catalytic spans 158 to 499; sequence PRNSLQRAID…DQILKLLELF (342 aa).

This sequence belongs to the glutamine synthetase family.

The catalysed reaction is L-glutamate + NH4(+) + ATP = L-glutamine + ADP + phosphate + H(+). The sequence is that of Type-1 glutamine synthetase 1 (glnA1) from Dictyostelium discoideum (Social amoeba).